A 976-amino-acid chain; its full sequence is Vacuolar membrane protease (976 aa).

Residues 1–51 are Cytoplasmic-facing; the sequence is MPLSTGLTLSSLNVMEKADNHYNMMTKQPPALSPVDMVSSRRGFNPIAFTP. The chain crosses the membrane as a helical span at residues 52–72; it reads WPVTILSSLVYLAFIIPIIVV. The Vacuolar segment spans residues 73–399; sequence HHLVPPAPKE…DNGNDGKLNN (327 aa). Residues N147 and N150 are each glycosylated (N-linked (GlcNAc...) asparagine). The Zn(2+) site is built by H206 and D218. The active-site Proton acceptor is E252. Zn(2+)-binding residues include E253, E278, and H351. The chain crosses the membrane as a helical span at residues 400–420; sequence GAGTLGVWFDFYGSSFAVFEL. Residues 421–427 lie on the Cytoplasmic side of the membrane; that stretch reads NTLFGHS. A helical transmembrane segment spans residues 428–448; that stretch reads VALLVVAPLLLIATCVTLYTL. The Vacuolar portion of the chain corresponds to 449–477; the sequence is DKMYMFSMYTYLSESGGQVSLYGLRGLFR. Residues 478–498 traverse the membrane as a helical segment; sequence FPLILGISTALTIGLAFLLMK. The Cytoplasmic portion of the chain corresponds to 499 to 519; the sequence is ANPFIIYSSPYAVWNPSALHR. The helical transmembrane segment at 520 to 540 threads the bilayer; the sequence is AYAFTWMFGMMWVLLVIATVY. The Vacuolar portion of the chain corresponds to 541–550; sequence QKQHGIASSY. The helical transmembrane segment at 551–571 threads the bilayer; the sequence is FIVFYFAGVSIATWISYLELF. Topologically, residues 572–675 are cytoplasmic; sequence GLPTTQDYAR…HRLEQRWSIN (104 aa). The interval 590 to 633 is disordered; sequence TPSSDSRLLAPSADELPPSGSAAGHDFNPEDVEDEEPTESTSLL. The span at 618 to 627 shows a compositional bias: acidic residues; sequence PEDVEDEEPT. Residues 676 to 696 form a helical membrane-spanning segment; it reads LISSAWILQFLFVAPIVIILL. The Vacuolar segment spans residues 697-718; that stretch reads GQLGLFLTSATYQIGADGGSQL. Residues 719 to 739 traverse the membrane as a helical segment; it reads VIYVGIAVLSVLILLPLFPFI. Residues 740-745 lie on the Cytoplasmic side of the membrane; sequence HRFTYH. The chain crosses the membrane as a helical span at residues 746-766; the sequence is IPTFLLFVLIGTLVYNLTAFP. The Vacuolar segment spans residues 767 to 976; sequence FSHSNRLKVA…LVEGSHSFKL (210 aa). An N-linked (GlcNAc...) asparagine glycan is attached at N848.

It belongs to the peptidase M28 family. Zn(2+) is required as a cofactor.

Its subcellular location is the vacuole membrane. In terms of biological role, may be involved in vacuolar sorting and osmoregulation. The protein is Vacuolar membrane protease of Arthroderma otae (strain ATCC MYA-4605 / CBS 113480) (Microsporum canis).